The sequence spans 250 residues: MTASILAAQIEVGEHHTATWLCMTVNTDTVLSTAIAALIVLALAFYLRSKVTSTAVPGGVQLFFEAITIQMRGQVESAIGMRIAPFVLPLAVTIFVFILISNWLSVLPVQYTDEHGQTTELLKPAAADINYVLALALFVFVCYHAAGIWRRGIVGHPIKLLKGHVAILAPINLVEEIAKPISLSLRLFGNIFAGSILVALIALFPPYIMWAPNAIWKSFDLFVGAIQAFIFALLTILYFSQAMELEEDHH.

Helical transmembrane passes span Thr27–Leu47, Ile83–Trp103, Ile129–Trp149, Ile191–Ala211, and Phe219–Phe239.

The protein belongs to the ATPase A chain family. In terms of assembly, F-type ATPases have 2 components, CF(1) - the catalytic core - and CF(0) - the membrane proton channel. CF(1) has five subunits: alpha(3), beta(3), gamma(1), delta(1), epsilon(1). CF(0) has three main subunits: a(1), b(2) and c(9-12). The alpha and beta chains form an alternating ring which encloses part of the gamma chain. CF(1) is attached to CF(0) by a central stalk formed by the gamma and epsilon chains, while a peripheral stalk is formed by the delta and b chains.

The protein resides in the cell membrane. Functionally, key component of the proton channel; it plays a direct role in the translocation of protons across the membrane. The protein is ATP synthase subunit a of Mycobacterium ulcerans (strain Agy99).